Reading from the N-terminus, the 65-residue chain is Large ribosomal subunit protein bL35 (65 aa).

Belongs to the bacterial ribosomal protein bL35 family.

This Acetivibrio thermocellus (strain ATCC 27405 / DSM 1237 / JCM 9322 / NBRC 103400 / NCIMB 10682 / NRRL B-4536 / VPI 7372) (Clostridium thermocellum) protein is Large ribosomal subunit protein bL35.